The primary structure comprises 149 residues: D-aminoacyl-tRNA deacylase (149 aa).

Residues 137 to 138 (GP) carry the Gly-cisPro motif, important for rejection of L-amino acids motif.

The protein belongs to the DTD family. As to quaternary structure, homodimer.

It localises to the cytoplasm. The catalysed reaction is glycyl-tRNA(Ala) + H2O = tRNA(Ala) + glycine + H(+). It carries out the reaction a D-aminoacyl-tRNA + H2O = a tRNA + a D-alpha-amino acid + H(+). Functionally, an aminoacyl-tRNA editing enzyme that deacylates mischarged D-aminoacyl-tRNAs. Also deacylates mischarged glycyl-tRNA(Ala), protecting cells against glycine mischarging by AlaRS. Acts via tRNA-based rather than protein-based catalysis; rejects L-amino acids rather than detecting D-amino acids in the active site. By recycling D-aminoacyl-tRNA to D-amino acids and free tRNA molecules, this enzyme counteracts the toxicity associated with the formation of D-aminoacyl-tRNA entities in vivo and helps enforce protein L-homochirality. The polypeptide is D-aminoacyl-tRNA deacylase (Desulforudis audaxviator (strain MP104C)).